We begin with the raw amino-acid sequence, 421 residues long: Phosphoribosylamine--glycine ligase (421 aa).

The ATP-grasp domain occupies 108–314; the sequence is KEIMVKYNVP…FAQNIDDIMM (207 aa). 134–195 is a binding site for ATP; sequence IEEQGAPIVV…EEFLDGEEFS (62 aa). 2 residues coordinate Mg(2+): Glu284 and Asn286.

This sequence belongs to the GARS family. Requires Mg(2+) as cofactor. Mn(2+) serves as cofactor.

It catalyses the reaction 5-phospho-beta-D-ribosylamine + glycine + ATP = N(1)-(5-phospho-beta-D-ribosyl)glycinamide + ADP + phosphate + H(+). It participates in purine metabolism; IMP biosynthesis via de novo pathway; N(1)-(5-phospho-D-ribosyl)glycinamide from 5-phospho-alpha-D-ribose 1-diphosphate: step 2/2. In Streptococcus pyogenes serotype M6 (strain ATCC BAA-946 / MGAS10394), this protein is Phosphoribosylamine--glycine ligase.